The following is a 98-amino-acid chain: Co-chaperonin GroES (98 aa).

It belongs to the GroES chaperonin family. In terms of assembly, heptamer of 7 subunits arranged in a ring. Interacts with the chaperonin GroEL.

The protein localises to the cytoplasm. Its function is as follows. Together with the chaperonin GroEL, plays an essential role in assisting protein folding. The GroEL-GroES system forms a nano-cage that allows encapsulation of the non-native substrate proteins and provides a physical environment optimized to promote and accelerate protein folding. GroES binds to the apical surface of the GroEL ring, thereby capping the opening of the GroEL channel. In Paenarthrobacter aurescens (strain TC1), this protein is Co-chaperonin GroES.